The following is a 312-amino-acid chain: tRNA-cytidine(32) 2-sulfurtransferase (312 aa).

Residues 47–52 (SGGKDS) carry the PP-loop motif motif. [4Fe-4S] cluster-binding residues include C122, C125, and C213.

It belongs to the TtcA family. Homodimer. Requires Mg(2+) as cofactor. [4Fe-4S] cluster is required as a cofactor.

It localises to the cytoplasm. The enzyme catalyses cytidine(32) in tRNA + S-sulfanyl-L-cysteinyl-[cysteine desulfurase] + AH2 + ATP = 2-thiocytidine(32) in tRNA + L-cysteinyl-[cysteine desulfurase] + A + AMP + diphosphate + H(+). The protein operates within tRNA modification. Functionally, catalyzes the ATP-dependent 2-thiolation of cytidine in position 32 of tRNA, to form 2-thiocytidine (s(2)C32). The sulfur atoms are provided by the cysteine/cysteine desulfurase (IscS) system. This chain is tRNA-cytidine(32) 2-sulfurtransferase, found in Shewanella frigidimarina (strain NCIMB 400).